The chain runs to 89 residues: Small ribosomal subunit protein uS15 (89 aa).

The protein belongs to the universal ribosomal protein uS15 family. As to quaternary structure, part of the 30S ribosomal subunit. Forms a bridge to the 50S subunit in the 70S ribosome, contacting the 23S rRNA.

In terms of biological role, one of the primary rRNA binding proteins, it binds directly to 16S rRNA where it helps nucleate assembly of the platform of the 30S subunit by binding and bridging several RNA helices of the 16S rRNA. Forms an intersubunit bridge (bridge B4) with the 23S rRNA of the 50S subunit in the ribosome. This chain is Small ribosomal subunit protein uS15, found in Pelotomaculum thermopropionicum (strain DSM 13744 / JCM 10971 / SI).